A 308-amino-acid polypeptide reads, in one-letter code: rRNA 2'-O-methyltransferase fibrillarin 1 (308 aa).

The segment at 1-68 (MRPPVTGGRG…PRGGMKGGSK (68 aa)) is disordered. Over residues 22 to 35 (GRGFGGGRSFGGGR) the composition is skewed to gly residues. The span at 42–52 (SGPRGRGRGAP) shows a compositional bias: basic residues. Positions 53 to 65 (RGRGGPPRGGMKG) are enriched in gly residues. Residues 156–157 (TT), 175–176 (EF), 200–201 (DA), and 220–223 (DVAQ) contribute to the S-adenosyl-L-methionine site.

It belongs to the methyltransferase superfamily. Fibrillarin family. As to quaternary structure, component of box C/D small nucleolar ribonucleoprotein (snoRNP) particles. Interacts with SKP1A. In terms of tissue distribution, expressed in roots, leaves and flowers. Expressed in stems.

The protein localises to the nucleus. It localises to the nucleolus. The enzyme catalyses a ribonucleotide in rRNA + S-adenosyl-L-methionine = a 2'-O-methylribonucleotide in rRNA + S-adenosyl-L-homocysteine + H(+). The catalysed reaction is L-glutaminyl-[histone H2A] + S-adenosyl-L-methionine = N(5)-methyl-L-glutaminyl-[histone H2A] + S-adenosyl-L-homocysteine + H(+). Its function is as follows. S-adenosyl-L-methionine-dependent methyltransferase that has the ability to methylate both RNAs and proteins. Involved in pre-rRNA processing. Utilizes the methyl donor S-adenosyl-L-methionine to catalyze the site-specific 2'-hydroxyl methylation of ribose moieties in pre-ribosomal RNA. Site specificity is provided by a guide RNA that base pairs with the substrate. Methylation occurs at a characteristic distance from the sequence involved in base pairing with the guide RNA. Also acts as a protein methyltransferase by mediating methylation of 'Gln-105' of histone H2A (H2AQ105me), a modification that impairs binding of the FACT complex and is specifically present at 35S ribosomal DNA locus. Binds monophosphate phosphoinositides in vitro. The polypeptide is rRNA 2'-O-methyltransferase fibrillarin 1 (Arabidopsis thaliana (Mouse-ear cress)).